A 190-amino-acid chain; its full sequence is UPF0149 protein NT01EI_3357 (190 aa).

It belongs to the UPF0149 family.

The sequence is that of UPF0149 protein NT01EI_3357 from Edwardsiella ictaluri (strain 93-146).